The primary structure comprises 598 residues: UvrABC system protein C (598 aa).

The 78-residue stretch at 14–91 (DSPGCYLHKD…IQKNMPKYNI (78 aa)) folds into the GIY-YIG domain. The region spanning 196-231 (DKIIEDLRSKMLAASEEMAFERAAEYRDLISGIATM) is the UVR domain.

This sequence belongs to the UvrC family. As to quaternary structure, interacts with UvrB in an incision complex.

It localises to the cytoplasm. In terms of biological role, the UvrABC repair system catalyzes the recognition and processing of DNA lesions. UvrC both incises the 5' and 3' sides of the lesion. The N-terminal half is responsible for the 3' incision and the C-terminal half is responsible for the 5' incision. This chain is UvrABC system protein C, found in Streptococcus pyogenes serotype M5 (strain Manfredo).